Here is a 531-residue protein sequence, read N- to C-terminus: Nuclear RNA export factor 3 (531 aa).

Disordered regions lie at residues 33–59 (RSEP…HGAH) and 83–106 (QDQT…GNMP). The segment covering 41 to 50 (MHSSSHQQQD) has biased composition (polar residues). Basic and acidic residues predominate over residues 83-102 (QDQTHVNMEREQKPPERRME). The RRM domain maps to 113–192 (WFKITVPFGI…IFVNPAGIPH (80 aa)). The NTF2 domain maps to 344–494 (LVLQFLQQYY…LCIVNDKLFV (151 aa)).

This sequence belongs to the NXF family. As to quaternary structure, interacts with NXT1, NXT2, E1B-AP5 and CRM1 nuclear export factor. Expressed at high level in testis and at low level in a small number of tissues.

Its subcellular location is the nucleus. It localises to the cytoplasm. May function as a tissue-specific nuclear mRNA export factor. This Homo sapiens (Human) protein is Nuclear RNA export factor 3 (NXF3).